Reading from the N-terminus, the 447-residue chain is Gamma-glutamyl phosphate reductase (447 aa).

Belongs to the gamma-glutamyl phosphate reductase family.

The protein resides in the cytoplasm. The catalysed reaction is L-glutamate 5-semialdehyde + phosphate + NADP(+) = L-glutamyl 5-phosphate + NADPH + H(+). The protein operates within amino-acid biosynthesis; L-proline biosynthesis; L-glutamate 5-semialdehyde from L-glutamate: step 2/2. Functionally, catalyzes the NADPH-dependent reduction of L-glutamate 5-phosphate into L-glutamate 5-semialdehyde and phosphate. The product spontaneously undergoes cyclization to form 1-pyrroline-5-carboxylate. This chain is Gamma-glutamyl phosphate reductase, found in Methanosarcina acetivorans (strain ATCC 35395 / DSM 2834 / JCM 12185 / C2A).